We begin with the raw amino-acid sequence, 108 residues long: Class I hydrophobin 3 (108 aa).

The signal sequence occupies residues 1-17 (MFFQTTIVAALAFLAVA). 4 disulfide bridges follow: Cys28–Cys87, Cys35–Cys81, Cys36–Cys69, and Cys88–Cys101. A glycan (N-linked (GlcNAc...) asparagine) is linked at Asn37.

This sequence belongs to the fungal hydrophobin family. As to quaternary structure, self-assembles to form functional amyloid fibrils called rodlets. Self-assembly into fibrillar rodlets occurs spontaneously at hydrophobic:hydrophilic interfaces and the rodlets further associate laterally to form amphipathic monolayers.

It is found in the secreted. The protein resides in the cell wall. In terms of biological role, aerial growth, conidiation, and dispersal of filamentous fungi in the environment rely upon a capability of their secreting small amphipathic proteins called hydrophobins (HPBs) with low sequence identity. Class I can self-assemble into an outermost layer of rodlet bundles on aerial cell surfaces, conferring cellular hydrophobicity that supports fungal growth, development and dispersal; whereas Class II form highly ordered films at water-air interfaces through intermolecular interactions but contribute nothing to the rodlet structure. Vmh3 is a class I hydrophobin that is essential for the maintenance of the surface hydrophobicity of the mycelium and might be involved in the development of fruiting bodies. Plays an important role in hyphal resistance against environmental stress. Necessary for the efficient biodegradation of lignin. The chain is Class I hydrophobin 3 from Pleurotus ostreatus (Oyster mushroom).